The sequence spans 437 residues: 3-ketoacyl-CoA thiolase (437 aa).

The active-site Acyl-thioester intermediate is Cys-99. Residues His-392 and Cys-422 each act as proton acceptor in the active site.

It belongs to the thiolase-like superfamily. Thiolase family. Heterotetramer of two alpha chains (FadJ) and two beta chains (FadI).

It localises to the cytoplasm. It catalyses the reaction an acyl-CoA + acetyl-CoA = a 3-oxoacyl-CoA + CoA. It participates in lipid metabolism; fatty acid beta-oxidation. Catalyzes the final step of fatty acid oxidation in which acetyl-CoA is released and the CoA ester of a fatty acid two carbons shorter is formed. In Erwinia tasmaniensis (strain DSM 17950 / CFBP 7177 / CIP 109463 / NCPPB 4357 / Et1/99), this protein is 3-ketoacyl-CoA thiolase.